The primary structure comprises 210 residues: Regulator of G-protein signaling 17 (210 aa).

A disordered region spans residues M1–N21. Positions N84–V200 constitute an RGS domain. Y137 is subject to Phosphotyrosine.

Interacts with GNAI1 and GNAQ. Interacts with GNAZ and GNAI2. Interacts with OPRM1. Forms a complex with mu-opioid receptors and G(alpha)z/i2 subunits, including GNAZ and GNAI2; the formation of this complex results in mu-opioid receptor desensitization. Interacts with HINT1. In terms of processing, N- and O-glycosylated in synapsomal membranes. Post-translationally, serine phosphorylated in synapsomal membranes. Sumoylated with SUMO1 and SUM02 in synaptosomes. The sumoylated forms act as a scaffold for sequestering mu-opioid receptor-activated G(alpha) subunits. Desumoylated by HINT1. In terms of tissue distribution, detected in brain (at protein level). Highly expressed in the hypothalamus, periaqueductal gray matter, and pons-medulla. Lower levels in the thalamus, cortex and spinal cord. Weak expression in the striatum and cerebellum.

The protein resides in the membrane. It is found in the synapse. It localises to the synaptosome. The protein localises to the nucleus. Its subcellular location is the cytoplasm. Regulates G protein-coupled receptor signaling cascades, including signaling via muscarinic acetylcholine receptor CHRM2 and dopamine receptor DRD2. Inhibits signal transduction by increasing the GTPase activity of G protein alpha subunits, thereby driving them into their inactive GDP-bound form. Binds selectively to GNAZ and GNAI2 subunits, accelerates their GTPase activity and regulates their signaling activities. Negatively regulates mu-opioid receptor-mediated activation of the G-proteins. The chain is Regulator of G-protein signaling 17 (Rgs17) from Mus musculus (Mouse).